The sequence spans 552 residues: Asparagine--tRNA ligase, cytoplasmic (552 aa).

Residues 1-23 (MSQVYVNEKTGADSTDVSGSEQQ) are disordered. The segment covering 12–23 (ADSTDVSGSEQQ) has biased composition (polar residues).

Belongs to the class-II aminoacyl-tRNA synthetase family.

Its subcellular location is the cytoplasm. It carries out the reaction tRNA(Asn) + L-asparagine + ATP = L-asparaginyl-tRNA(Asn) + AMP + diphosphate + H(+). This chain is Asparagine--tRNA ligase, cytoplasmic (DED81), found in Debaryomyces hansenii (strain ATCC 36239 / CBS 767 / BCRC 21394 / JCM 1990 / NBRC 0083 / IGC 2968) (Yeast).